We begin with the raw amino-acid sequence, 148 residues long: Glutamate mutase sigma subunit (148 aa).

A B12-binding domain is found at 3-140; it reads NPTIVIGVIG…KRDIERVMQS (138 aa). Adenosylcob(III)alamin contacts are provided by residues 13 to 17, His16, 61 to 63, and 93 to 97; these read ADCHA, SSI, and NLVIG.

This sequence belongs to the methylaspartate mutase GlmS subunit family. In terms of assembly, heterotetramer composed of 2 epsilon subunits (GlmE) and 2 sigma subunits (GlmS). GlmE exists as a homodimer and GlmS as a monomer. Requires adenosylcob(III)alamin as cofactor.

The catalysed reaction is (2S,3S)-3-methyl-L-aspartate = L-glutamate. It participates in amino-acid degradation; L-glutamate degradation via mesaconate pathway; acetate and pyruvate from L-glutamate: step 1/4. Catalyzes the carbon skeleton rearrangement of L-glutamate to L-threo-3-methylaspartate ((2S,3S)-3-methylaspartate). The polypeptide is Glutamate mutase sigma subunit (Yersinia enterocolitica serotype O:8 / biotype 1B (strain NCTC 13174 / 8081)).